We begin with the raw amino-acid sequence, 400 residues long: Large envelope protein (400 aa).

Position 1 is an N-acetylmethionine (Met-1). Disordered stretches follow at residues 1–64, 85–118, and 143–174; these read MGGW…GAFG, LTTV…SHPQ, and PGGS…PAPN. Gly-2 carries the N-myristoyl glycine; by host lipid modification. The segment at 2 to 119 is pre-S1; the sequence is GGWSSKPRQG…PPLRDSHPQA (118 aa). A pre-S region spans residues 2 to 174; sequence GGWSSKPRQG…SSRTGDPAPN (173 aa). Residues 2–181 lie on the Virion surface; in external conformation side of the membrane; sequence GGWSSKPRQG…APNMESTTSG (180 aa). Residues 2-253 lie on the Intravirion; in internal conformation side of the membrane; that stretch reads GGWSSKPRQG…PGYRWMCLRR (252 aa). N-linked (GlcNAc...) asparagine glycosylation is present at Trp-4. Residues 96-106 are compositionally biased toward polar residues; sequence STNRQSGRQPT. Positions 120–174 are pre-S2; sequence MQWNSTTFHQVLLDPRVRGLYFPPGGSSSGTVNPVPTTASPISSISSRTGDPAPN. A compositionally biased stretch (low complexity) spans 155–166; the sequence is PTTASPISSISS. Residues 182–202 form a helical membrane-spanning segment; the sequence is FLGPLLVLQAGFFLLTRILTI. Residues 203 to 253 are Intravirion; in external conformation-facing; the sequence is PQSLDSWWTSLNFLGGAPTCPGQNSQSPTSNHSPTSCPPICPGYRWMCLRR. Residues 254-274 form a helical membrane-spanning segment; it reads FIIFLFILLLCLIFLLVLLDY. Residues 275–348 are Virion surface-facing; it reads QGMLPVCPLL…GASVRFSWLS (74 aa). Asn-320 is a glycosylation site (N-linked (GlcNAc...) asparagine; by host). Residues 349–369 form a helical membrane-spanning segment; it reads LLVPFVQWFVGLSPTVWLSVI. Over 370 to 375 the chain is Intravirion; that stretch reads WMMWYW. The helical transmembrane segment at 376–398 threads the bilayer; it reads GPSLYNILSPFLPLLPIFFCLWV. The Virion surface segment spans residues 399–400; it reads YI.

The protein belongs to the orthohepadnavirus major surface antigen family. As to quaternary structure, in its internal form (Li-HBsAg), interacts with the capsid protein and with the isoform S. Interacts with host chaperone CANX. Associates with host chaperone CANX through its pre-S2 N glycan; this association may be essential for isoform M proper secretion. In terms of assembly, interacts with isoform L. Interacts with the antigens of satellite virus HDV (HDVAgs); this interaction is required for encapsidation of HDV genomic RNA. In terms of processing, isoform M is N-terminally acetylated by host at a ratio of 90%, and N-glycosylated by host at the pre-S2 region. Post-translationally, myristoylated.

The protein resides in the virion membrane. In terms of biological role, the large envelope protein exists in two topological conformations, one which is termed 'external' or Le-HBsAg and the other 'internal' or Li-HBsAg. In its external conformation the protein attaches the virus to cell receptors and thereby initiating infection. This interaction determines the species specificity and liver tropism. This attachment induces virion internalization predominantly through caveolin-mediated endocytosis. The large envelope protein also assures fusion between virion membrane and endosomal membrane. In its internal conformation the protein plays a role in virion morphogenesis and mediates the contact with the nucleocapsid like a matrix protein. The middle envelope protein plays an important role in the budding of the virion. It is involved in the induction of budding in a nucleocapsid independent way. In this process the majority of envelope proteins bud to form subviral lipoprotein particles of 22 nm of diameter that do not contain a nucleocapsid. The polypeptide is Large envelope protein (Homo sapiens (Human)).